Reading from the N-terminus, the 263-residue chain is uncharacterized protein (263 aa).

This sequence belongs to the A.longa ORF167/ORF288 family.

The protein localises to the plastid. This is an uncharacterized protein from Euglena longa (Euglenophycean alga).